The sequence spans 389 residues: ATP phosphoribosyltransferase regulatory subunit (389 aa).

This sequence belongs to the class-II aminoacyl-tRNA synthetase family. HisZ subfamily. Heteromultimer composed of HisG and HisZ subunits.

The protein localises to the cytoplasm. The protein operates within amino-acid biosynthesis; L-histidine biosynthesis; L-histidine from 5-phospho-alpha-D-ribose 1-diphosphate: step 1/9. Required for the first step of histidine biosynthesis. May allow the feedback regulation of ATP phosphoribosyltransferase activity by histidine. This chain is ATP phosphoribosyltransferase regulatory subunit, found in Hydrogenovibrio crunogenus (strain DSM 25203 / XCL-2) (Thiomicrospira crunogena).